A 178-amino-acid polypeptide reads, in one-letter code: V-type proton ATPase subunit c''2 (178 aa).

The Lumenal portion of the chain corresponds to 1–24; that stretch reads MSGVAIHASSWGAALVRISPYTFS. Residues 25 to 45 form a helical membrane-spanning segment; the sequence is AIGIAISIGVSVLGAAWGIYI. Residues 46 to 64 are Cytoplasmic-facing; it reads TGSSLIGAAIEAPRITSKN. Residues 65–85 form a helical membrane-spanning segment; sequence LISVIFCEAVAIYGVIVAIIL. The Lumenal segment spans residues 86 to 108; it reads QTKLESVPSSKMYDAESLRAGYA. A helical membrane pass occupies residues 109-129; it reads IFASGIIVGFANLVCGLCVGI. The Cytoplasmic portion of the chain corresponds to 130-147; it reads IGSSCALSDAQNSTLFVK. Residues 148-168 traverse the membrane as a helical segment; that stretch reads ILVIEIFGSALGLFGVIVGII. The Lumenal portion of the chain corresponds to 169–178; sequence MSAQATWPTK.

The protein belongs to the V-ATPase proteolipid subunit family. In terms of assembly, V-ATPase is a heteromultimeric enzyme composed of a peripheral catalytic V1 complex (components A to H) attached to an integral membrane V0 proton pore complex (components: a, c, c'', d and e). The proteolipid components c and c'' are present as a hexameric ring that forms the proton-conducting pore. Interacts with APD2.

It localises to the endoplasmic reticulum membrane. The protein resides in the golgi apparatus membrane. In terms of biological role, proton-conducting pore forming subunit of the membrane integral V0 complex of vacuolar ATPase. V-ATPase is responsible for acidifying a variety of intracellular compartments in eukaryotic cells. The protein is V-type proton ATPase subunit c''2 (VHA-c''2) of Arabidopsis thaliana (Mouse-ear cress).